We begin with the raw amino-acid sequence, 33 residues long: Photosystem II reaction center protein Psb30 (33 aa).

Residues 5–25 (IVAQLTVLALIVVSGPLVIAL) form a helical membrane-spanning segment.

The protein belongs to the Psb30/Ycf12 family. PSII is composed of 1 copy each of membrane proteins PsbA, PsbB, PsbC, PsbD, PsbE, PsbF, PsbH, PsbI, PsbJ, PsbK, PsbL, PsbM, PsbT, PsbX, PsbY, PsbZ, Psb30/Ycf12, peripheral proteins of the oxygen-evolving complex and a large number of cofactors. It forms dimeric complexes.

The protein resides in the plastid. It is found in the chloroplast thylakoid membrane. A core subunit of photosystem II (PSII), probably helps stabilize the reaction center. The chain is Photosystem II reaction center protein Psb30 from Angiopteris evecta (Mule's foot fern).